The chain runs to 845 residues: Dynein axonemal assembly factor 5 (845 aa).

8 HEAT repeats span residues 47 to 84, 138 to 175, 180 to 217, 260 to 297, 332 to 369, 523 to 561, 674 to 715, and 766 to 803; these read DVFDKLYLHLLKCYEDRFESVRSKAIQVVSAFLSSLPP, ECYPLVVKILIKSIKDDYPVVQREGCSAVVTLSRLADT, PFTESILLPLYTMLNHKHAQARISAIQAIARLSLHMDA, SFFERILPLVLCCLKDESPEVLNHIYPQWLKCGIQYFN, QRSLRLLQLITRETSDWKDNVRLHALKLLYQFVLHAEA, NFGQTLIEKMVKLLNTSVPKIHERWFHLALQDVINLDAA, SESV…MSVE, and AIVKRAMDLLLLYHESPEKDMRAAVAVTLKVLAKSHPE.

The protein belongs to the DNAAF5 family. As to expression, expressed in testis.

Its subcellular location is the cytoplasm. The protein resides in the dynein axonemal particle. In terms of biological role, cytoplasmic protein involved in the delivery of the dynein machinery to the motile cilium. It is required for the assembly of the axonemal dynein inner and outer arms, two structures attached to the peripheral outer doublet A microtubule of the axoneme, that play a crucial role in cilium motility. The protein is Dynein axonemal assembly factor 5 of Drosophila melanogaster (Fruit fly).